A 402-amino-acid polypeptide reads, in one-letter code: UDP-N-acetylmuramoylalanine--D-glutamate ligase (402 aa).

97–103 is a binding site for ATP; that stretch reads GTNGKTT.

It belongs to the MurCDEF family.

The protein localises to the cytoplasm. The enzyme catalyses UDP-N-acetyl-alpha-D-muramoyl-L-alanine + D-glutamate + ATP = UDP-N-acetyl-alpha-D-muramoyl-L-alanyl-D-glutamate + ADP + phosphate + H(+). Its pathway is cell wall biogenesis; peptidoglycan biosynthesis. Its function is as follows. Cell wall formation. Catalyzes the addition of glutamate to the nucleotide precursor UDP-N-acetylmuramoyl-L-alanine (UMA). The sequence is that of UDP-N-acetylmuramoylalanine--D-glutamate ligase from Campylobacter jejuni subsp. jejuni serotype O:23/36 (strain 81-176).